Reading from the N-terminus, the 329-residue chain is D-lactate dehydrogenase (329 aa).

NAD(+)-binding positions include K154–I155, D174, C205–P206, N211, T232–R234, and D258. The active site involves R234. E263 is a catalytic residue. The active-site Proton donor is H295.

The protein belongs to the D-isomer specific 2-hydroxyacid dehydrogenase family.

It catalyses the reaction (R)-lactate + NAD(+) = pyruvate + NADH + H(+). Functionally, fermentative lactate dehydrogenase. This chain is D-lactate dehydrogenase (ldhA), found in Escherichia coli (strain K12).